The following is a 164-amino-acid chain: Large ribosomal subunit protein bL19 (164 aa).

The segment at 144–164 (EAEKQTEVQAEPKIEKSEEKK) is disordered.

The protein belongs to the bacterial ribosomal protein bL19 family.

This protein is located at the 30S-50S ribosomal subunit interface and may play a role in the structure and function of the aminoacyl-tRNA binding site. The sequence is that of Large ribosomal subunit protein bL19 from Pelagibacter ubique (strain HTCC1062).